We begin with the raw amino-acid sequence, 122 residues long: Large ribosomal subunit protein uL14 (122 aa).

It belongs to the universal ribosomal protein uL14 family. In terms of assembly, part of the 50S ribosomal subunit. Forms a cluster with proteins L3 and L19. In the 70S ribosome, L14 and L19 interact and together make contacts with the 16S rRNA in bridges B5 and B8.

Functionally, binds to 23S rRNA. Forms part of two intersubunit bridges in the 70S ribosome. The polypeptide is Large ribosomal subunit protein uL14 (Herminiimonas arsenicoxydans).